A 195-amino-acid polypeptide reads, in one-letter code: UPF0157 protein BH1888 (195 aa).

Residues 1–12 (MPPMKDSSNSTP) are compositionally biased toward polar residues. The segment at 1–21 (MPPMKDSSNSTPRTDEELQEV) is disordered.

This sequence belongs to the UPF0157 (GrpB) family.

This is UPF0157 protein BH1888 from Halalkalibacterium halodurans (strain ATCC BAA-125 / DSM 18197 / FERM 7344 / JCM 9153 / C-125) (Bacillus halodurans).